Reading from the N-terminus, the 1161-residue chain is Hamartin (1161 aa).

Lys-30 participates in a covalent cross-link: Glycyl lysine isopeptide (Lys-Gly) (interchain with G-Cter in ubiquitin). 2 disordered regions span residues Pro-296–Arg-336 and Cys-353–Val-591. Low complexity predominate over residues Ser-303 to Arg-336. Over residues Thr-393 to Pro-402 the composition is skewed to pro residues. Positions Gln-403–Glu-784 are mediates interaction with WDR45B. A compositionally biased stretch (basic and acidic residues) spans Glu-471–Ser-484. Residues Ser-484, Ser-502, Ser-508, Ser-518, Ser-592, and Ser-595 each carry the phosphoserine modification. The segment covering Leu-509–Asn-529 has biased composition (polar residues). Coiled coils occupy residues Ile-721–Leu-849, Thr-879–Asp-917, and Glu-967–Asp-991. Disordered stretches follow at residues Gly-1003–Ser-1077 and Asn-1092–Ser-1161. Residues His-1004–Thr-1017 are compositionally biased toward basic and acidic residues. A compositionally biased stretch (low complexity) spans Ser-1026 to Ser-1043. Positions Pro-1064–Ser-1077 are enriched in polar residues. Position 1094 is a phosphoserine (Ser-1094). The span at Val-1103 to Thr-1113 shows a compositional bias: low complexity. 2 stretches are compositionally biased toward basic and acidic residues: residues Leu-1114–Thr-1124 and Asp-1152–Ser-1161.

In terms of assembly, component of the TSC-TBC complex (also named Rhebulator complex), composed of 2 molecules of TSC1, 2 molecules of TSC2 and 1 molecule of TBC1D7. Probably forms a complex composed of chaperones HSP90 and HSP70, co-chaperones STIP1/HOP, CDC37, PPP5C, PTGES3/p23, TSC1 and client protein TSC2. Forms a complex composed of chaperones HSP90 and HSP70, co-chaperones CDC37, PPP5C, TSC1 and client protein TSC2, CDK4, AKT, RAF1 and NR3C1; this complex does not contain co-chaperones STIP1/HOP and PTGES3/p23. Forms a complex containing HSP90AA1, TSC1 and TSC2; TSC1 is required to recruit TCS2 to the complex. Interacts (via C-terminus) with the closed form of HSP90AA1 (via the middle domain and TPR repeat-binding motif). Interacts with DOCK7. Interacts with FBXW5. Interacts with WDR45B. Interacts with RPAP3 and URI1. Post-translationally, phosphorylation at Ser-502 does not affect interaction with TSC2. 'Lys-63'-linked ubiquitinated at Lys-30 by PELI1; the ubiquitination promotes TSC1/TSC2 complex stability.

The protein resides in the lysosome membrane. It localises to the cytoplasm. It is found in the cytosol. Functionally, non-catalytic component of the TSC-TBC complex, a multiprotein complex that acts as a negative regulator of the canonical mTORC1 complex, an evolutionarily conserved central nutrient sensor that stimulates anabolic reactions and macromolecule biosynthesis to promote cellular biomass generation and growth. The TSC-TBC complex acts as a GTPase-activating protein (GAP) for the small GTPase RHEB, a direct activator of the protein kinase activity of mTORC1. In absence of nutrients, the TSC-TBC complex inhibits mTORC1, thereby preventing phosphorylation of ribosomal protein S6 kinase (RPS6KB1 and RPS6KB2) and EIF4EBP1 (4E-BP1) by the mTORC1 signaling. The TSC-TBC complex is inactivated in response to nutrients, relieving inhibition of mTORC1. Within the TSC-TBC complex, TSC1 stabilizes TSC2 and prevents TSC2 self-aggregation. Involved in microtubule-mediated protein transport via its ability to regulate mTORC1 signaling. Also acts as a co-chaperone for HSP90AA1 facilitating HSP90AA1 chaperoning of protein clients such as kinases, TSC2 and glucocorticoid receptor NR3C1. Increases ATP binding to HSP90AA1 and inhibits HSP90AA1 ATPase activity. Competes with the activating co-chaperone AHSA1 for binding to HSP90AA1, thereby providing a reciprocal regulatory mechanism for chaperoning of client proteins. Recruits TSC2 to HSP90AA1 and stabilizes TSC2 by preventing the interaction between TSC2 and ubiquitin ligase HERC1. In Mus musculus (Mouse), this protein is Hamartin.